Reading from the N-terminus, the 323-residue chain is Deaminated glutathione amidase (323 aa).

Residues 1–33 (MLGFITRPPHQLLCTGYRLLRTPVLCTQPRPRT) constitute a mitochondrion transit peptide. The CN hydrolase domain maps to 42–294 (LPLVAVCQVT…PGLCLARIDL (253 aa)). E82 (proton acceptor) is an active-site residue. Catalysis depends on K157, which acts as the Proton donor. Residue C199 is the Nucleophile of the active site.

This sequence belongs to the carbon-nitrogen hydrolase superfamily. NIT1/NIT2 family. Expressed in most tissues with higher expression in adult liver and kidney as well as in fetal adrenal gland and skeletal muscle.

The protein localises to the mitochondrion. It is found in the cytoplasm. The enzyme catalyses N-(4-oxoglutaryl)-L-cysteinylglycine + H2O = L-cysteinylglycine + 2-oxoglutarate. The catalysed reaction is N-(4-carboxy-4-oxobutanoyl)-L-ethylglycylglycine + H2O = N-(2-aminobutanoyl)glycine + 2-oxoglutarate. In terms of biological role, catalyzes the hydrolysis of the amide bond in N-(4-oxoglutarate)-L-cysteinylglycine (deaminated glutathione), a metabolite repair reaction to dispose of the harmful deaminated glutathione. Possesses amidase activity toward deaminated ophthalmate in vitro. Plays a role in cell growth and apoptosis: loss of expression promotes cell growth, resistance to DNA damage stress and increased incidence to NMBA-induced tumors. Has tumor suppressor properties that enhances the apoptotic responsiveness in cancer cells; this effect is additive to the tumor suppressor activity of FHIT. It is also a negative regulator of primary T-cells. This Mus musculus (Mouse) protein is Deaminated glutathione amidase.